We begin with the raw amino-acid sequence, 65 residues long: Crotamine (65 aa).

The N-terminal stretch at 1 to 22 (MKILYLLFAFLFLAFLSEPGNA) is a signal peptide. Short sequence motifs (nuclear localization signal) lie at residues 24–40 (KQCH…EKIC) and 49–61 (KMDC…CCKK). 3 disulfides stabilise this stretch: cysteine 26–cysteine 58, cysteine 33–cysteine 52, and cysteine 40–cysteine 59.

Belongs to the crotamine-myotoxin family. As to quaternary structure, monomer. Expressed by the venom gland.

The protein localises to the secreted. Functionally, cationic peptide that possesses multiple functions. It acts as a cell-penetrating peptide (CPP), and as a potent voltage-gated potassium channel inhibitor. It exhibits antimicrobial activities, hind limb paralysis, and severe muscle necrosis by a non-enzymatic mechanism. As a cell-penetrating peptide, crotamine has high specificity for actively proliferating cells, and interacts inside the cell with subcellular and subnuclear structures, like vesicular compartments, chromosomes and centrioles. It penetrates into the cells as fast as five minutes after its addition to cell culture medium. In vivo, after intraperitoneal administration, it is found in cells of peritoneal fluid and bone marrow, demonstrating preferential nuclear and perinuclear localization. To enter the cell, it interacts with the chains of heparan sulfate membrane proteoglycan (HSPG), and is endocytosed (in complex with HSPG) in vesicles which are transported into the cell with the help of clathrin. Inside the cell, crotamine accumulates in lysosomal vesicles. As soon as the peptide accumulates in endosomes/lysosomes vesicles, these compartments are disrupted and their contents released into the cytosol. This loss of lysosomal content induces cell death at high concentrations, or promotes the distribution of crotamine in cytoplasmic compartments, which is a step before crotamine nuclear uptake. As a potassium channel inhibitor, this toxin selectively inhibits Kv1.1/KCNA1, Kv1.2/KCNA2 and Kv1.3/KCNA3 channels with an IC(50) of 369, 386 and 287 nM, respectively. The inhibition of Kv1.3/KCNA channels induced by this toxin occurs rapidly and is voltage-independent. The channel inhibition is reversible after washing, suggesting a pure and classical channel blockage effect, without effects in potassium channel kinetics. As an antimicrobial peptide, crotamine shows antibacterial activity against E.coli and B.subtilis, and antifungal activity against Candida spp., Trichosporon spp. and C.neoformans. It kills bacteria through membrane permeabilization. The polypeptide is Crotamine (CRO2) (Crotalus durissus terrificus (South American rattlesnake)).